Reading from the N-terminus, the 159-residue chain is Probable NADH dehydrogenase [ubiquinone] 1 alpha subcomplex subunit 12 (159 aa).

It belongs to the complex I NDUFA12 subunit family. As to quaternary structure, complex I is composed of at least 49 different subunits.

The protein localises to the mitochondrion inner membrane. Accessory subunit of the mitochondrial membrane respiratory chain NADH dehydrogenase (Complex I), that is believed not to be involved in catalysis. Complex I functions in the transfer of electrons from NADH to the respiratory chain. The immediate electron acceptor for the enzyme is believed to be ubiquinone. This chain is Probable NADH dehydrogenase [ubiquinone] 1 alpha subcomplex subunit 12, found in Arabidopsis thaliana (Mouse-ear cress).